Consider the following 289-residue polypeptide: MPELPEVEVVRRGLQAHVTGRTITEVRVHHPRAVRRHDAGPADLTARLRGARINGTDRRGKYLWLTLNTAGVHRPTDTALVVHLGMSGQMLLGAVPCAAHVRISALLDDGTVLSFADQRTFGGWLLADLVTVDGSVVPVPVAHLARDPLDPRFDCDAVVKVLRRKHSELKRQLLDQRVVSGIGNIYADEALWRAKVNGAHVAATLRCRRLGAVLHAAADVMREALAKGGTSFDSLYVNVNGESGYFERSLDAYGREGENCRRCGAVIRRERFMNRSSFYCPRCQPRPRK.

Pro-2 functions as the Schiff-base intermediate with DNA in the catalytic mechanism. The Proton donor role is filled by Glu-3. Residue Lys-61 is the Proton donor; for beta-elimination activity of the active site. Residues His-100, Arg-119, and Lys-165 each coordinate DNA. An FPG-type zinc finger spans residues 251 to 285 (DAYGREGENCRRCGAVIRRERFMNRSSFYCPRCQP). Arg-275 serves as the catalytic Proton donor; for delta-elimination activity.

It belongs to the FPG family. In terms of assembly, monomer. Zn(2+) is required as a cofactor.

The enzyme catalyses Hydrolysis of DNA containing ring-opened 7-methylguanine residues, releasing 2,6-diamino-4-hydroxy-5-(N-methyl)formamidopyrimidine.. The catalysed reaction is 2'-deoxyribonucleotide-(2'-deoxyribose 5'-phosphate)-2'-deoxyribonucleotide-DNA = a 3'-end 2'-deoxyribonucleotide-(2,3-dehydro-2,3-deoxyribose 5'-phosphate)-DNA + a 5'-end 5'-phospho-2'-deoxyribonucleoside-DNA + H(+). In terms of biological role, involved in base excision repair of DNA damaged by oxidation or by mutagenic agents. Acts as a DNA glycosylase that recognizes and removes damaged bases. Has a preference for oxidized purines, such as 7,8-dihydro-8-oxoguanine (8-oxoG) when paired with C, G or T, as well as methyl-faPy (formanidopyrimidine residues) in poly(dG-dC) and spiroiminodihydantoin:C base pairs. Unlike its E.coli ortholog has no activity on 8-oxoG:A. Has AP (apurinic/apyrimidinic) lyase activity and introduces nicks in the DNA strand. Cleaves the DNA backbone by beta-delta elimination to generate a single-strand break at the site of the removed base with both 3'- and 5'-phosphates. Cleaves ssDNA containing an AP site. Complements the H(2)O(2) sensitivity of an M.smegmatis fpg disruption mutant; upon expression in M.smegmatis excises 8-oxoG from dsDNA. The chain is Formamidopyrimidine-DNA glycosylase 1 (fpg1) from Mycobacterium tuberculosis (strain ATCC 25618 / H37Rv).